The primary structure comprises 255 residues: DNA repair protein RecO (255 aa).

Belongs to the RecO family.

Functionally, involved in DNA repair and RecF pathway recombination. The protein is DNA repair protein RecO of Listeria monocytogenes serotype 4b (strain CLIP80459).